The following is a 256-amino-acid chain: MTSSERVAKVVLVDIEGTTTSISFVHEVLFPYAKQNVEKFLRDSWKVDDIQRIVQDMQQLPQFEEYKVLLRAPPAEVDVELIAGFVRYLIDQDLKVTPMKTLQGLIWEQGYTNGELKGHVYEDVPAAFEAWRAAGLQIAVYSSGSVAAQKLIFGHSLVGNLQPHLSAYFDTHVGHKQDQKSYENIANLLKEDPKQILFLTDIPGEAAAARSAGLQAVILQRPGNAALADDQKASFELMPDFKSLQNLKLPINKYQA.

Mg(2+) contacts are provided by Asp14 and Glu16. Substrate-binding positions include 142-143 (SS) and Lys176. Position 201 (Asp201) interacts with Mg(2+).

Belongs to the HAD-like hydrolase superfamily. MasA/MtnC family. As to quaternary structure, monomer. Requires Mg(2+) as cofactor.

Its subcellular location is the cytoplasm. The protein resides in the nucleus. It carries out the reaction 5-methylsulfanyl-2,3-dioxopentyl phosphate + H2O = 1,2-dihydroxy-5-(methylsulfanyl)pent-1-en-3-one + phosphate. It functions in the pathway amino-acid biosynthesis; L-methionine biosynthesis via salvage pathway; L-methionine from S-methyl-5-thio-alpha-D-ribose 1-phosphate: step 3/6. It participates in amino-acid biosynthesis; L-methionine biosynthesis via salvage pathway; L-methionine from S-methyl-5-thio-alpha-D-ribose 1-phosphate: step 4/6. Its function is as follows. Bifunctional enzyme that catalyzes the enolization of 2,3-diketo-5-methylthiopentyl-1-phosphate (DK-MTP-1-P) into the intermediate 2-hydroxy-3-keto-5-methylthiopentenyl-1-phosphate (HK-MTPenyl-1-P), which is then dephosphorylated to form the acireductone 1,2-dihydroxy-3-keto-5-methylthiopentene (DHK-MTPene). This is Enolase-phosphatase E1 from Drosophila yakuba (Fruit fly).